Reading from the N-terminus, the 359-residue chain is Oxopyrrolidines biosynthesis cluster protein G (359 aa).

Residues 1-32 (MDHLRDSLLSSLPRDSPSIGAMDYARRDREST) form a disordered region. A compositionally biased stretch (low complexity) spans 7–18 (SLLSSLPRDSPS).

In terms of biological role, part of the gene cluster that mediates the biosynthesis of oxopyrrolidines, polyketide-amino acid hybrid compounds with feature structures of tetramic acid. Does not seem to play a role in oxopyrrolidines A and B biosynthesis. The polypeptide is Oxopyrrolidines biosynthesis cluster protein G (Penicillium oxalicum (strain 114-2 / CGMCC 5302) (Penicillium decumbens)).